We begin with the raw amino-acid sequence, 274 residues long: Penicillin-insensitive murein endopeptidase (274 aa).

The signal sequence occupies residues 1–19 (MNKTAIALLALLASSASLA). 3 disulfides stabilise this stretch: Cys-44–Cys-265, Cys-187–Cys-235, and Cys-216–Cys-223. Positions 110, 113, 120, 147, 150, and 211 each coordinate Zn(2+). A disordered region spans residues 227–274 (PLPPPGDGCGAELQSWFEPPKPGTTKPEKKTPPPLPPSCQALLDEHVI).

Belongs to the peptidase M74 family. As to quaternary structure, dimer. It depends on Zn(2+) as a cofactor.

Its subcellular location is the periplasm. Murein endopeptidase that cleaves the D-alanyl-meso-2,6-diamino-pimelyl amide bond that connects peptidoglycan strands. Likely plays a role in the removal of murein from the sacculus. The sequence is that of Penicillin-insensitive murein endopeptidase from Escherichia coli O9:H4 (strain HS).